The chain runs to 542 residues: CTP synthase (542 aa).

An amidoligase domain region spans residues 1–265 (MARYIFITGG…DQEVLSAFGI (265 aa)). Residue Ser-13 participates in CTP binding. Ser-13 contributes to the UTP binding site. 14 to 19 (SLGKGL) is an ATP binding site. Tyr-54 provides a ligand contact to L-glutamine. Asp-71 contributes to the ATP binding site. Residues Asp-71 and Glu-139 each contribute to the Mg(2+) site. CTP contacts are provided by residues 146 to 148 (DIE), 186 to 191 (KTKPTQ), and Lys-222. UTP is bound by residues 186–191 (KTKPTQ) and Lys-222. 238 to 240 (RDV) lines the ATP pocket. Residues 291–541 (TIAIVGKYTG…IAAAMEQSRL (251 aa)) form the Glutamine amidotransferase type-1 domain. Gly-353 is an L-glutamine binding site. Catalysis depends on Cys-380, which acts as the Nucleophile; for glutamine hydrolysis. L-glutamine contacts are provided by residues 381–384 (FGMQ), Glu-404, and Arg-469. Catalysis depends on residues His-514 and Glu-516.

This sequence belongs to the CTP synthase family. In terms of assembly, homotetramer.

The enzyme catalyses UTP + L-glutamine + ATP + H2O = CTP + L-glutamate + ADP + phosphate + 2 H(+). It carries out the reaction L-glutamine + H2O = L-glutamate + NH4(+). It catalyses the reaction UTP + NH4(+) + ATP = CTP + ADP + phosphate + 2 H(+). The protein operates within pyrimidine metabolism; CTP biosynthesis via de novo pathway; CTP from UDP: step 2/2. Its activity is regulated as follows. Allosterically activated by GTP, when glutamine is the substrate; GTP has no effect on the reaction when ammonia is the substrate. The allosteric effector GTP functions by stabilizing the protein conformation that binds the tetrahedral intermediate(s) formed during glutamine hydrolysis. Inhibited by the product CTP, via allosteric rather than competitive inhibition. Its function is as follows. Catalyzes the ATP-dependent amination of UTP to CTP with either L-glutamine or ammonia as the source of nitrogen. Regulates intracellular CTP levels through interactions with the four ribonucleotide triphosphates. In Beijerinckia indica subsp. indica (strain ATCC 9039 / DSM 1715 / NCIMB 8712), this protein is CTP synthase.